Here is a 420-residue protein sequence, read N- to C-terminus: Glucose-1-phosphate adenylyltransferase (420 aa).

Residues tyrosine 107, glycine 173, 188 to 189, and serine 206 contribute to the alpha-D-glucose 1-phosphate site; that span reads EK.

Belongs to the bacterial/plant glucose-1-phosphate adenylyltransferase family. In terms of assembly, homotetramer.

The catalysed reaction is alpha-D-glucose 1-phosphate + ATP + H(+) = ADP-alpha-D-glucose + diphosphate. It participates in glycan biosynthesis; glycogen biosynthesis. In terms of biological role, involved in the biosynthesis of ADP-glucose, a building block required for the elongation reactions to produce glycogen. Catalyzes the reaction between ATP and alpha-D-glucose 1-phosphate (G1P) to produce pyrophosphate and ADP-Glc. The chain is Glucose-1-phosphate adenylyltransferase from Shewanella baltica (strain OS185).